Reading from the N-terminus, the 408-residue chain is CinA-like protein (408 aa).

It belongs to the CinA family.

The polypeptide is CinA-like protein (Thermotoga maritima (strain ATCC 43589 / DSM 3109 / JCM 10099 / NBRC 100826 / MSB8)).